Reading from the N-terminus, the 599-residue chain is MENIRNFSIIAHVDHGKSTLADRLIEFCGAITDREKKDQMLDTLDIERERGITIKLQAVKINYHSKIQNKDFTLHLIDTPGHVDFSYEVSRSLAACEGALLLIDASQGIEAQTVANFWKAVEQNLVIIPVINKIDLPAADPDRIKLQIRDILGLDPDEAILASAKEGIGIEEILEAITKRIPPPKGDENAPLKALIFDSYYDPYRGAVAFVRIFDGSLKVGDRIKLFSTGKEFEVTEVGAQTPKMTKLPILKAGDVGYIAASIKDVRDIRVGDTITLKSNPTKEAIPGFKTAKPMVFAGLYPTEDSDFEELRDALEKYSINDAAITYEPETSPAIGMGFRCGFLGLLHMEIVQERLSREYNIDVITTAPSVVYRLKLKNRSDILEVKSSNDIPDNFGLIEYIEEPYVLATIITPKDYVGNIINICQDKRGIQVKFSYLDQNTALLEYEMPLQEIIVDFHDKIKSASKGYASFDYEFLGYKESDLVKLTIMINKEPVDALSFLVHKDKAYRKARALVEQLKETIPRQLFEINVQAAIGSKIIASERIPPMRANVTAKCYGGDISRKRKLLEKQKEGKKRMKQFGKVSLPQEAFLSVLKAQ.

The 184-residue stretch at 2-185 (ENIRNFSIIA…AITKRIPPPK (184 aa)) folds into the tr-type G domain. GTP contacts are provided by residues 14–19 (DHGKST) and 132–135 (NKID).

This sequence belongs to the TRAFAC class translation factor GTPase superfamily. Classic translation factor GTPase family. LepA subfamily.

It is found in the cell inner membrane. The catalysed reaction is GTP + H2O = GDP + phosphate + H(+). Functionally, required for accurate and efficient protein synthesis under certain stress conditions. May act as a fidelity factor of the translation reaction, by catalyzing a one-codon backward translocation of tRNAs on improperly translocated ribosomes. Back-translocation proceeds from a post-translocation (POST) complex to a pre-translocation (PRE) complex, thus giving elongation factor G a second chance to translocate the tRNAs correctly. Binds to ribosomes in a GTP-dependent manner. The sequence is that of Elongation factor 4 from Hydrogenobaculum sp. (strain Y04AAS1).